A 376-amino-acid chain; its full sequence is Queuine tRNA-ribosyltransferase (376 aa).

The active-site Proton acceptor is the aspartate 93. Substrate-binding positions include 93-97 (DSGGF), aspartate 147, glutamine 190, and glycine 217. Positions 248-254 (GVGKPGD) are RNA binding. Aspartate 267 (nucleophile) is an active-site residue. Zn(2+) contacts are provided by cysteine 305, cysteine 307, cysteine 310, and histidine 336.

This sequence belongs to the queuine tRNA-ribosyltransferase family. Homodimer. Within each dimer, one monomer is responsible for RNA recognition and catalysis, while the other monomer binds to the replacement base PreQ1. The cofactor is Zn(2+).

It carries out the reaction 7-aminomethyl-7-carbaguanine + guanosine(34) in tRNA = 7-aminomethyl-7-carbaguanosine(34) in tRNA + guanine. It functions in the pathway tRNA modification; tRNA-queuosine biosynthesis. Catalyzes the base-exchange of a guanine (G) residue with the queuine precursor 7-aminomethyl-7-deazaguanine (PreQ1) at position 34 (anticodon wobble position) in tRNAs with GU(N) anticodons (tRNA-Asp, -Asn, -His and -Tyr). Catalysis occurs through a double-displacement mechanism. The nucleophile active site attacks the C1' of nucleotide 34 to detach the guanine base from the RNA, forming a covalent enzyme-RNA intermediate. The proton acceptor active site deprotonates the incoming PreQ1, allowing a nucleophilic attack on the C1' of the ribose to form the product. After dissociation, two additional enzymatic reactions on the tRNA convert PreQ1 to queuine (Q), resulting in the hypermodified nucleoside queuosine (7-(((4,5-cis-dihydroxy-2-cyclopenten-1-yl)amino)methyl)-7-deazaguanosine). The protein is Queuine tRNA-ribosyltransferase of Dinoroseobacter shibae (strain DSM 16493 / NCIMB 14021 / DFL 12).